The primary structure comprises 131 residues: Profilin-3 (131 aa).

C13 and C115 are disulfide-bonded. The Involved in PIP2 interaction motif lies at 81-97; that stretch reads AVIRGKKGAGGITIKKT. Position 111 is a phosphothreonine (T111).

This sequence belongs to the profilin family. In terms of assembly, occurs in many kinds of cells as a complex with monomeric actin in a 1:1 ratio. Post-translationally, phosphorylated by MAP kinases.

The protein localises to the cytoplasm. The protein resides in the cytoskeleton. Binds to actin and affects the structure of the cytoskeleton. At high concentrations, profilin prevents the polymerization of actin, whereas it enhances it at low concentrations. The polypeptide is Profilin-3 (Olea europaea (Common olive)).